Consider the following 397-residue polypeptide: Tryptophan synthase beta chain (397 aa).

The residue at position 86 (Lys-86) is an N6-(pyridoxal phosphate)lysine.

This sequence belongs to the TrpB family. As to quaternary structure, tetramer of two alpha and two beta chains. The cofactor is pyridoxal 5'-phosphate.

It carries out the reaction (1S,2R)-1-C-(indol-3-yl)glycerol 3-phosphate + L-serine = D-glyceraldehyde 3-phosphate + L-tryptophan + H2O. It participates in amino-acid biosynthesis; L-tryptophan biosynthesis; L-tryptophan from chorismate: step 5/5. In terms of biological role, the beta subunit is responsible for the synthesis of L-tryptophan from indole and L-serine. The chain is Tryptophan synthase beta chain from Aeromonas hydrophila subsp. hydrophila (strain ATCC 7966 / DSM 30187 / BCRC 13018 / CCUG 14551 / JCM 1027 / KCTC 2358 / NCIMB 9240 / NCTC 8049).